Reading from the N-terminus, the 234-residue chain is Probable GTP-binding protein EngB (234 aa).

In terms of domain architecture, EngB-type G spans 23–209; the sequence is AVPEVAFAGR…QRTVAGWLCL (187 aa). Residues 31–38, 58–62, 82–85, 149–152, and 187–190 contribute to the GTP site; these read GRSNAGKS, GRTQH, DLPG, TKAD, and LFSS. Ser38 and Thr60 together coordinate Mg(2+). The tract at residues 210 to 234 is disordered; sequence PEAMPPSPDAEPAKKTPSPDAQRGE.

This sequence belongs to the TRAFAC class TrmE-Era-EngA-EngB-Septin-like GTPase superfamily. EngB GTPase family. It depends on Mg(2+) as a cofactor.

In terms of biological role, necessary for normal cell division and for the maintenance of normal septation. In Ralstonia nicotianae (strain ATCC BAA-1114 / GMI1000) (Ralstonia solanacearum), this protein is Probable GTP-binding protein EngB.